The chain runs to 629 residues: DNA topoisomerase 4 subunit B (629 aa).

ATP is bound by residues Tyr4, Asn41, Asp68, Gly109–Ile115, and Lys333. The 114-residue stretch at Ala411–Pro524 folds into the Toprim domain. Residues Glu417, Asp489, and Asp491 each coordinate Mg(2+).

This sequence belongs to the type II topoisomerase family. ParE type 1 subfamily. As to quaternary structure, heterotetramer composed of ParC and ParE. It depends on Mg(2+) as a cofactor. Mn(2+) serves as cofactor. Ca(2+) is required as a cofactor.

It carries out the reaction ATP-dependent breakage, passage and rejoining of double-stranded DNA.. Its function is as follows. Topoisomerase IV is essential for chromosome segregation. It relaxes supercoiled DNA. Performs the decatenation events required during the replication of a circular DNA molecule. The sequence is that of DNA topoisomerase 4 subunit B from Pseudomonas aeruginosa (strain ATCC 15692 / DSM 22644 / CIP 104116 / JCM 14847 / LMG 12228 / 1C / PRS 101 / PAO1).